A 136-amino-acid chain; its full sequence is Large ribosomal subunit protein uL16 (136 aa).

It belongs to the universal ribosomal protein uL16 family. In terms of assembly, part of the 50S ribosomal subunit.

Binds 23S rRNA and is also seen to make contacts with the A and possibly P site tRNAs. This is Large ribosomal subunit protein uL16 from Shewanella pealeana (strain ATCC 700345 / ANG-SQ1).